Consider the following 112-residue polypeptide: Small ribosomal subunit protein uS17 (112 aa).

It belongs to the universal ribosomal protein uS17 family. In terms of assembly, part of the 30S ribosomal subunit.

One of the primary rRNA binding proteins, it binds specifically to the 5'-end of 16S ribosomal RNA. This is Small ribosomal subunit protein uS17 from Haloarcula marismortui (strain ATCC 43049 / DSM 3752 / JCM 8966 / VKM B-1809) (Halobacterium marismortui).